The primary structure comprises 423 residues: Tubulin beta-2 chain (423 aa).

GTP is bound by residues E44, S113, G117, T118, G119, N179, and N201. E44 provides a ligand contact to Mg(2+). The interval 394–423 (VSEYQQYQDATAEEEGEYDEDEDDEGGDYA) is disordered. The segment covering 404-423 (TAEEEGEYDEDEDDEGGDYA) has biased composition (acidic residues).

Belongs to the tubulin family. As to quaternary structure, dimer of alpha and beta chains. A typical microtubule is a hollow water-filled tube with an outer diameter of 25 nm and an inner diameter of 15 nM. Alpha-beta heterodimers associate head-to-tail to form protofilaments running lengthwise along the microtubule wall with the beta-tubulin subunit facing the microtubule plus end conferring a structural polarity. Microtubules usually have 13 protofilaments but different protofilament numbers can be found in some organisms and specialized cells. Mg(2+) serves as cofactor.

The protein resides in the cytoplasm. It localises to the cytoskeleton. Functionally, tubulin is the major constituent of microtubules, a cylinder consisting of laterally associated linear protofilaments composed of alpha- and beta-tubulin heterodimers. Microtubules grow by the addition of GTP-tubulin dimers to the microtubule end, where a stabilizing cap forms. Below the cap, tubulin dimers are in GDP-bound state, owing to GTPase activity of alpha-tubulin. The sequence is that of Tubulin beta-2 chain (TUBB2) from Oomycete-like sp. (strain MacKay2000).